The sequence spans 60 residues: UPF0434 protein YcaR (60 aa).

It belongs to the UPF0434 family.

The sequence is that of UPF0434 protein YcaR from Salmonella agona (strain SL483).